Consider the following 479-residue polypeptide: Anaerobic nitric oxide reductase flavorubredoxin (479 aa).

The segment at 30–210 (LRGSSYNSYL…PFSRLVTPKI (181 aa)) is zinc metallo-hydrolase. Positions 79, 81, 83, 147, 166, and 227 each coordinate Fe cation. The Flavodoxin-like domain occupies 254–393 (ITIFYDTMSN…LCREHGREIA (140 aa)). Residues 260–264 (TMSNN) and 342–369 (AFGS…EMSL) each bind FMN. A Rubredoxin-like domain is found at 423–474 (GPRMQCSVCQWIYDPAKGEPMQDVAPGTPWSEVPDNFLCPECSLGKDVFEEL). Fe cation-binding residues include Cys-428, Cys-431, Cys-461, and Cys-464.

This sequence in the N-terminal section; belongs to the zinc metallo-hydrolase group 3 family. As to quaternary structure, homotetramer. Fe cation serves as cofactor. FMN is required as a cofactor.

It is found in the cytoplasm. It functions in the pathway nitrogen metabolism; nitric oxide reduction. Its function is as follows. Anaerobic nitric oxide reductase; uses NADH to detoxify nitric oxide (NO), protecting several 4Fe-4S NO-sensitive enzymes. Has at least 2 reductase partners, only one of which (NorW, flavorubredoxin reductase) has been identified. NO probably binds to the di-iron center; electrons enter from the NorW at rubredoxin and are transferred sequentially to the FMN center and the di-iron center. Also able to function as an aerobic oxygen reductase. This Shigella boydii serotype 4 (strain Sb227) protein is Anaerobic nitric oxide reductase flavorubredoxin.